The following is a 357-amino-acid chain: Membrane-bound lytic murein transglycosylase C (357 aa).

The N-terminal stretch at 1–15 (MKKYLLLALLPFLYA) is a signal peptide. Residue cysteine 16 is the site of N-palmitoyl cysteine attachment. The S-diacylglycerol cysteine moiety is linked to residue cysteine 16.

It belongs to the transglycosylase Slt family.

It is found in the cell outer membrane. The enzyme catalyses Exolytic cleavage of the (1-&gt;4)-beta-glycosidic linkage between N-acetylmuramic acid (MurNAc) and N-acetylglucosamine (GlcNAc) residues in peptidoglycan, from either the reducing or the non-reducing ends of the peptidoglycan chains, with concomitant formation of a 1,6-anhydrobond in the MurNAc residue.. Its function is as follows. Murein-degrading enzyme. May play a role in recycling of muropeptides during cell elongation and/or cell division. The protein is Membrane-bound lytic murein transglycosylase C of Haemophilus influenzae (strain PittEE).